Reading from the N-terminus, the 771-residue chain is ATP-dependent RNA helicase dbp7 (771 aa).

The segment covering 23–35 (TKVKGGTWRDRLS) has biased composition (basic and acidic residues). Positions 23–139 (TKVKGGTWRD…EVEDAKPTNA (117 aa)) are disordered. The segment covering 53 to 69 (ASNGEQNSNPRNPNRIQ) has biased composition (polar residues). Low complexity predominate over residues 90 to 105 (SQPRQQQQQHPGAPRQ). Basic and acidic residues predominate over residues 119–135 (NAVEEKNEAGAEVEDAK). The short motif at 146 to 175 (DTFTNLGLSAPLAAHLLTKLEVKAPTAIQK) is the Q motif element. In terms of domain architecture, Helicase ATP-binding spans 179 to 378 (TQLLKEESDA…EISLKDAVHI (200 aa)). ATP is bound at residue 192-199 (AETGSGKT). Positions 314 to 317 (DEGD) match the DEAD box motif. A Helicase C-terminal domain is found at 403–615 (QLKQSYAIVA…ALTRNSADDI (213 aa)). Disordered regions lie at residues 458-485 (NGDE…KLGA) and 703-771 (VPGL…FNLA). Acidic residues predominate over residues 460–476 (DEEEKKEESEDSDEEDA). Residues 712–723 (DTKKDFKADRKP) show a composition bias toward basic and acidic residues.

It belongs to the DEAD box helicase family. DDX31/DBP7 subfamily.

It localises to the nucleus. The protein localises to the nucleolus. It catalyses the reaction ATP + H2O = ADP + phosphate + H(+). Its function is as follows. ATP-binding RNA helicase involved in the biogenesis of 60S ribosomal subunits and is required for the normal formation of 25S and 5.8S rRNAs. In Aspergillus niger (strain ATCC MYA-4892 / CBS 513.88 / FGSC A1513), this protein is ATP-dependent RNA helicase dbp7 (dbp7).